Here is a 198-residue protein sequence, read N- to C-terminus: uncharacterized protein (198 aa).

It localises to the plastid. The protein localises to the chloroplast. This is an uncharacterized protein from Antithamnion sp. (Red alga).